The chain runs to 348 residues: Uroporphyrinogen decarboxylase (348 aa).

Residues 27–31, Phe46, Asp76, Tyr152, Ser207, and His320 contribute to the substrate site; that span reads RQAGR.

The protein belongs to the uroporphyrinogen decarboxylase family. In terms of assembly, homodimer.

It localises to the cytoplasm. It catalyses the reaction uroporphyrinogen III + 4 H(+) = coproporphyrinogen III + 4 CO2. It functions in the pathway porphyrin-containing compound metabolism; protoporphyrin-IX biosynthesis; coproporphyrinogen-III from 5-aminolevulinate: step 4/4. Catalyzes the decarboxylation of four acetate groups of uroporphyrinogen-III to yield coproporphyrinogen-III. The sequence is that of Uroporphyrinogen decarboxylase from Bacillus cereus (strain B4264).